Reading from the N-terminus, the 439-residue chain is Membrane sensor protein UhpC (439 aa).

Topologically, residues 1–25 (MLPFLKAPADAPLMTDKYEIDARYR) are cytoplasmic. A helical transmembrane segment spans residues 26 to 45 (YWRRHILLTIWLGYALFYFT). The Periplasmic portion of the chain corresponds to 46–66 (RKSFNAAVPEILANGVLSRSD). The helical transmembrane segment at 67–87 (IGLLATLFYITYGVSKFVSGI) threads the bilayer. The Cytoplasmic segment spans residues 88-95 (VSDRSNAR). Residues 96-118 (YFMGIGLIATGIINILFGFSTSL) traverse the membrane as a helical segment. Residues 119–121 (WAF) are Periplasmic-facing. The chain crosses the membrane as a helical span at residues 122-144 (AVLWVLNAFFQGWGSPVCARLLT). Residues 145–162 (AWYSRTERGGWWALWNTA) lie on the Cytoplasmic side of the membrane. Residues 163–183 (HNVGGALIPIVMAAAALHYGW) traverse the membrane as a helical segment. Arg184 is a topological domain (periplasmic). A helical transmembrane segment spans residues 185-205 (AGMMIAGCMAIVVGIFLCWRL). Topologically, residues 206–244 (RDRPQALGLPAVGEWRHDALEIAQQQEGAGLTRKEILTK) are cytoplasmic. The chain crosses the membrane as a helical span at residues 245–265 (YVLLNPYIWLLSFCYVLVYVV). Over 266–289 (RAAINDWGNLYMSETLGVDLVTAN) the chain is Periplasmic. The helical transmembrane segment at 290-310 (TAVTMFELGGFIGALVAGWGS) threads the bilayer. At 311-322 (DKLFNGNRGPMN) the chain is on the cytoplasmic side. Residues 323–343 (LIFAAGILLSVGSLWLMPFAS) traverse the membrane as a helical segment. The Periplasmic segment spans residues 344-349 (YVMQAT). Residues 350–370 (CFFTIGFFVFGPQMLIGMAAA) form a helical membrane-spanning segment. At 371-379 (ECSHKEAAG) the chain is on the cytoplasmic side. The chain crosses the membrane as a helical span at residues 380–400 (AATGFVGLFAYLGASLAGWPL). Topologically, residues 401–410 (AKVLDTWHWS) are periplasmic. Residues 411–431 (GFFVVISIAAGISALLLLPFL) traverse the membrane as a helical segment. Residues 432–439 (NAQTPREA) lie on the Cytoplasmic side of the membrane.

Belongs to the major facilitator superfamily. Organophosphate:Pi antiporter (OPA) (TC 2.A.1.4) family.

Its subcellular location is the cell inner membrane. In terms of biological role, part of the UhpABC signaling cascade that controls the expression of the hexose phosphate transporter UhpT. UhpC senses external glucose-6-phosphate and interacts with the histidine kinase UhpB, leading to the stimulation of the autokinase activity of UhpB. In Escherichia coli (strain K12), this protein is Membrane sensor protein UhpC.